A 154-amino-acid chain; its full sequence is Lipoprotein signal peptidase (154 aa).

The next 2 helical transmembrane spans lie at 55 to 75 (GHMW…IYIM) and 84 to 104 (LFSI…IDRV). Active-site residues include aspartate 111 and aspartate 129. Residues 124 to 144 (IFNVADASLSVGVVLMLVYVF) traverse the membrane as a helical segment.

It belongs to the peptidase A8 family.

Its subcellular location is the cell membrane. The catalysed reaction is Release of signal peptides from bacterial membrane prolipoproteins. Hydrolyzes -Xaa-Yaa-Zaa-|-(S,diacylglyceryl)Cys-, in which Xaa is hydrophobic (preferably Leu), and Yaa (Ala or Ser) and Zaa (Gly or Ala) have small, neutral side chains.. The protein operates within protein modification; lipoprotein biosynthesis (signal peptide cleavage). This protein specifically catalyzes the removal of signal peptides from prolipoproteins. This Listeria monocytogenes serovar 1/2a (strain ATCC BAA-679 / EGD-e) protein is Lipoprotein signal peptidase.